The following is a 272-amino-acid chain: 1,4-dihydroxy-2-naphthoyl-CoA synthase (272 aa).

Residues Arg33, 72–76 (SGGDQ), Tyr84, 116–120 (YAIGG), Thr142, Ser148, Tyr245, and Lys260 contribute to the substrate site. 141–143 (QTG) is a binding site for hydrogencarbonate. The segment covering 253-264 (GRDAFKEKRDPD) has biased composition (basic and acidic residues). Residues 253-272 (GRDAFKEKRDPDFDQFPKFP) are disordered.

It belongs to the enoyl-CoA hydratase/isomerase family. MenB subfamily. The cofactor is hydrogencarbonate.

It catalyses the reaction 2-succinylbenzoyl-CoA + H(+) = 1,4-dihydroxy-2-naphthoyl-CoA + H2O. It functions in the pathway quinol/quinone metabolism; 1,4-dihydroxy-2-naphthoate biosynthesis; 1,4-dihydroxy-2-naphthoate from chorismate: step 6/7. Its pathway is quinol/quinone metabolism; menaquinone biosynthesis. In terms of biological role, converts o-succinylbenzoyl-CoA (OSB-CoA) to 1,4-dihydroxy-2-naphthoyl-CoA (DHNA-CoA). This Staphylococcus haemolyticus (strain JCSC1435) protein is 1,4-dihydroxy-2-naphthoyl-CoA synthase.